The primary structure comprises 205 residues: Holliday junction branch migration complex subunit RuvA (205 aa).

The domain I stretch occupies residues 1 to 64; that stretch reads MIGRLKGILV…EDAQLLYGFI (64 aa). The domain II stretch occupies residues 65–143; the sequence is HKEERSLFRL…SLMEASMGAE (79 aa). Residues 144 to 156 form a flexible linker region; the sequence is REFVLKSNFTPAP. A domain III region spans residues 157 to 205; the sequence is VAATVEEDAIAALLSLGYKPQQASKAVSSAFQEGMDPEQLIKAALKSML.

Belongs to the RuvA family. Homotetramer. Forms an RuvA(8)-RuvB(12)-Holliday junction (HJ) complex. HJ DNA is sandwiched between 2 RuvA tetramers; dsDNA enters through RuvA and exits via RuvB. An RuvB hexamer assembles on each DNA strand where it exits the tetramer. Each RuvB hexamer is contacted by two RuvA subunits (via domain III) on 2 adjacent RuvB subunits; this complex drives branch migration. In the full resolvosome a probable DNA-RuvA(4)-RuvB(12)-RuvC(2) complex forms which resolves the HJ.

It localises to the cytoplasm. Functionally, the RuvA-RuvB-RuvC complex processes Holliday junction (HJ) DNA during genetic recombination and DNA repair, while the RuvA-RuvB complex plays an important role in the rescue of blocked DNA replication forks via replication fork reversal (RFR). RuvA specifically binds to HJ cruciform DNA, conferring on it an open structure. The RuvB hexamer acts as an ATP-dependent pump, pulling dsDNA into and through the RuvAB complex. HJ branch migration allows RuvC to scan DNA until it finds its consensus sequence, where it cleaves and resolves the cruciform DNA. This is Holliday junction branch migration complex subunit RuvA from Shewanella amazonensis (strain ATCC BAA-1098 / SB2B).